A 338-amino-acid chain; its full sequence is Anthranilate phosphoribosyltransferase (338 aa).

Residues Gly81, 84-85, Thr89, 91-94, 109-117, and Ala121 each bind 5-phospho-alpha-D-ribose 1-diphosphate; these read GD, NVST, and KHGNRALSS. Gly81 serves as a coordination point for anthranilate. Ser93 contacts Mg(2+). Residue Asn112 coordinates anthranilate. Residue Arg167 participates in anthranilate binding. Residues Asp225 and Glu226 each coordinate Mg(2+).

It belongs to the anthranilate phosphoribosyltransferase family. As to quaternary structure, homodimer. It depends on Mg(2+) as a cofactor.

The catalysed reaction is N-(5-phospho-beta-D-ribosyl)anthranilate + diphosphate = 5-phospho-alpha-D-ribose 1-diphosphate + anthranilate. It functions in the pathway amino-acid biosynthesis; L-tryptophan biosynthesis; L-tryptophan from chorismate: step 2/5. Functionally, catalyzes the transfer of the phosphoribosyl group of 5-phosphorylribose-1-pyrophosphate (PRPP) to anthranilate to yield N-(5'-phosphoribosyl)-anthranilate (PRA). This chain is Anthranilate phosphoribosyltransferase, found in Chelativorans sp. (strain BNC1).